Reading from the N-terminus, the 715-residue chain is Lactococcin-A transport/processing ATP-binding protein LcnC (715 aa).

Residues 11–138 enclose the Peptidase C39 domain; sequence QVDEMDCGCA…SEWTGISLFL (128 aa). Cys-17 is an active-site residue. The next 6 membrane-spanning stretches (helical) occupy residues 167–187, 197–217, 237–257, 282–302, 307–327, and 396–416; these read VILNIVIASFIVTLINILGSY, IPNALMGTLGIISVGLLLTYI, LAIDVILSYIRHIFQLPMSFF, TILSLFLDLTIVVMTGLILGL, LFLLVLLAIPLYIVVIIIFTP, and AIIQLTLSVTILWFGATLVIS. The region spanning 168–450 is the ABC transmembrane type-1 domain; that stretch reads ILNIVIASFI…IINLQTKLQK (283 aa). The ABC transporter domain maps to 482-715; it reads LNMSDISYQY…NGFYEQLYHN (234 aa). An ATP-binding site is contributed by 515-522; sequence GMSGSGKS.

The protein belongs to the ABC transporter superfamily. Bacteriocin (lactococcin) exporter (TC 3.A.1.112.3) family.

It localises to the cell membrane. Functionally, involved in the export process of the bacteriocin lactococcin A. The polypeptide is Lactococcin-A transport/processing ATP-binding protein LcnC (lcnC) (Lactococcus lactis subsp. lactis (Streptococcus lactis)).